Reading from the N-terminus, the 376-residue chain is Lateral eye opsin (376 aa).

Over 1-46 (MANQLSYSSLGWPYQPNASVVDTMPKEMLYMIHEHWYAFPPMNPLW) the chain is Extracellular. Asn-17 carries N-linked (GlcNAc...) asparagine glycosylation. The helical transmembrane segment at 47-71 (YSILGVAMIILGIICVLGNGMVIYL) threads the bilayer. Over 72–83 (MMTTKSLRTPTN) the chain is Cytoplasmic. A helical membrane pass occupies residues 84–108 (LLVVNLAFSDFCMMAFMMPTMTSNC). Residues 109–123 (FAETWILGPFMCEVY) are Extracellular-facing. Cys-120 and Cys-197 are oxidised to a cystine. A helical transmembrane segment spans residues 124–143 (GMAGSLFGCASIWSMVMITL). The Cytoplasmic segment spans residues 144–162 (DRYNVIVRGMAAAPLTHKK). Residues 163–186 (ATLLLLFVWIWSGGWTILPFFGWS) traverse the membrane as a helical segment. Over 187–210 (RYVPEGNLTSCTVDYLTKDWSSAS) the chain is Extracellular. N-linked (GlcNAc...) asparagine glycosylation occurs at Asn-193. Residues 211–238 (YVVIYGLAVYFLPLITMIYCYFFIVHAV) traverse the membrane as a helical segment. At 239–274 (AEHEKQLREQAKKMNVASLRANADQQKQSAECRLAK) the chain is on the cytoplasmic side. The chain crosses the membrane as a helical span at residues 275-298 (VAMMTVGLWFMAWTPYLIISWAGV). The Extracellular segment spans residues 299-306 (FSSGTRLT). Residues 307-331 (PLATIWGSVFAKANSCYNPIVYGIS) traverse the membrane as a helical segment. The residue at position 318 (Lys-318) is an N6-(retinylidene)lysine. The Cytoplasmic portion of the chain corresponds to 332 to 376 (HPRYKAALYQRFPSLACGSGESGSDVKSEASATTTMEEKPKIPEA). Residues 349–376 (GSGESGSDVKSEASATTTMEEKPKIPEA) form a disordered region. The span at 367–376 (MEEKPKIPEA) shows a compositional bias: basic and acidic residues.

The protein belongs to the G-protein coupled receptor 1 family. Opsin subfamily. In terms of processing, phosphorylated on some or all of the serine and threonine residues present in the C-terminal region. Lateral eye.

It localises to the membrane. Its function is as follows. Visual pigments are the light-absorbing molecules that mediate vision. They consist of an apoprotein, opsin, covalently linked to cis-retinal. This Limulus polyphemus (Atlantic horseshoe crab) protein is Lateral eye opsin.